A 287-amino-acid chain; its full sequence is Mitochondrial dicarboxylate carrier (287 aa).

Solcar repeat units follow at residues 8–88 (SRWY…VRDR), 101–188 (EKVL…AKQL), and 197–280 (DNIF…LRKN). 6 consecutive transmembrane segments (helical) span residues 10–30 (WYFGGLASCGAACCTHPLDLL), 63–82 (GLSASLCRQMTYSLTRFAIY), 103–123 (VLLGSVSGLAGGFVGTPADLV), 163–182 (GATMASSRGALVTVGQLSCY), 203–223 (FVASFIAGGCATFLCQPLDVL), and 255–275 (GLVPAGIRLIPHTVLTFVFLE).

The protein belongs to the mitochondrial carrier (TC 2.A.29) family. In terms of tissue distribution, present in high amounts in liver and kidney, and at lower levels in all the other tissues analyzed.

The protein resides in the mitochondrion inner membrane. The catalysed reaction is (S)-malate(in) + phosphate(out) = (S)-malate(out) + phosphate(in). It catalyses the reaction malonate(out) + (S)-malate(in) = malonate(in) + (S)-malate(out). The enzyme catalyses (S)-malate(in) + succinate(out) = (S)-malate(out) + succinate(in). It carries out the reaction (S)-malate(in) + sulfate(out) = (S)-malate(out) + sulfate(in). The catalysed reaction is malonate(out) + phosphate(in) = malonate(in) + phosphate(out). It catalyses the reaction succinate(out) + phosphate(in) = succinate(in) + phosphate(out). The enzyme catalyses sulfate(out) + phosphate(in) = sulfate(in) + phosphate(out). It carries out the reaction malonate(out) + succinate(in) = malonate(in) + succinate(out). Catalyzes the electroneutral exchange or flux of physiologically important metabolites such as dicarboxylates (malonate, malate, succinate), inorganic sulfur-containing anions, and phosphate, across mitochondrial inner membrane. Plays an important role in gluconeogenesis, fatty acid metabolism, urea synthesis, and sulfur metabolism, particularly in liver, by supplying the substrates for the different metabolic processes. Regulates fatty acid release from adipocytes, and contributes to systemic insulin sensitivity. The sequence is that of Mitochondrial dicarboxylate carrier (SLC25A10) from Homo sapiens (Human).